The primary structure comprises 106 residues: uncharacterized protein (106 aa).

The first 31 residues, 1 to 31 (MKKKTKIILSLLAALIVILIVLPVLSPVVFT), serve as a signal peptide directing secretion.

This is an uncharacterized protein from Bacillus subtilis (strain 168).